We begin with the raw amino-acid sequence, 346 residues long: Queuosine 5'-phosphate N-glycosylase/hydrolase (346 aa).

5 residues coordinate queuine: histidine 49, phenylalanine 243, aspartate 245, aspartate 310, and aspartate 315. The Nucleophile or transition state stabilizer role is filled by aspartate 245.

The protein belongs to the QNG1 protein family.

The catalysed reaction is queuosine 5'-phosphate + H2O = queuine + D-ribose 5-phosphate. In terms of biological role, catalyzes the hydrolysis of queuosine 5'-phosphate, releasing the nucleobase queuine (q). Is required for salvage of queuine from exogenous queuosine (Q) that is imported and then converted to queuosine 5'-phosphate intracellularly. This chain is Queuosine 5'-phosphate N-glycosylase/hydrolase, found in Schizosaccharomyces pombe (strain 972 / ATCC 24843) (Fission yeast).